The chain runs to 409 residues: Sex-determination protein fem-3 (409 aa).

In terms of assembly, component of a complex containing fem-1, fem-2 and fem-3. Interacts with fem-1 and fem-2 (via N-terminus). Part of a E3 ubiquitin-protein ligase complex, at least composed of cul-2, elc-1, tra-1, fem-1, fem-2 and fem-3; mediates the ubiquitination and subsequent proteasomal degradation of tra-1. Interacts with sel-10. Interacts with tra-2.

Required for male development. In XO (male) animals, fem-3 directs male differentiation in all tissues. In XX (hermaphrodite animals), it specifies the first 80 or so germ cells to be sperm. Negatively regulates male development when bound to tra-2. This Caenorhabditis briggsae protein is Sex-determination protein fem-3.